A 152-amino-acid polypeptide reads, in one-letter code: Transcriptional regulator MraZ (152 aa).

2 SpoVT-AbrB domains span residues 5 to 52 and 81 to 124; these read AHAI…PLCE and ASEC…SETR.

This sequence belongs to the MraZ family. As to quaternary structure, forms oligomers.

The protein resides in the cytoplasm. The protein localises to the nucleoid. The chain is Transcriptional regulator MraZ from Tolumonas auensis (strain DSM 9187 / NBRC 110442 / TA 4).